A 229-amino-acid polypeptide reads, in one-letter code: MVAFSSLICALTSIASTLAMPTGLEPESSVNVTERGMYDFVLGAHNDHRRRASINYDQNYQTGGQVSYSPSNTGFSVNWNTQDDFVVGVGWTTGSSAPINFGGSFSVNSGTGLLSVYGWSTNPLVEYYIMEDNHNYPAQGTVKGTVTSDGATYTIWENTRVNEPSIQGTATFNQYISVRNSPRTSGTVTVQNHFNAWASLGLHLGQMNYQVVAVEGWGGSGSASQSVSN.

A signal peptide spans 1–19 (MVAFSSLICALTSIASTLA). Positions 20–51 (MPTGLEPESSVNVTERGMYDFVLGAHNDHRRR) are excised as a propeptide. The N-linked (GlcNAc...) asparagine glycan is linked to Asn31. In terms of domain architecture, GH11 spans 42-228 (LGAHNDHRRR…GSGSASQSVS (187 aa)). Residue Tyr117 participates in substrate binding. Glu126 functions as the Nucleophile in the catalytic mechanism. Residues Tyr128, Arg160, Pro164, Gln174, and Tyr209 each contribute to the substrate site. The active-site Proton donor is the Glu215.

This sequence belongs to the glycosyl hydrolase 11 (cellulase G) family.

The protein localises to the secreted. It catalyses the reaction Endohydrolysis of (1-&gt;4)-beta-D-xylosidic linkages in xylans.. The protein operates within glycan degradation; xylan degradation. In terms of biological role, glycoside hydrolase involved in the hydrolysis of xylan, a major plant cell wall hemicellulose made up of 1,4-beta-linked D-xylopyranose residues. Catalyzes the endohydrolysis of the main-chain 1,4-beta-glycosidic bonds connecting the xylose subunits yielding various xylooligosaccharides and xylose. This is Endo-1,4-beta-xylanase 1 from Hypocrea jecorina (strain QM6a) (Trichoderma reesei).